The chain runs to 69 residues: uncharacterized protein (69 aa).

The Cytoplasmic segment spans residues 1 to 15 (MLLYIVIIVACIISK). A helical transmembrane segment spans residues 16–36 (LVPNEYWAIHLFFIIMIFMVY). Over 37–69 (MYEKLDIHQKYQFWNYTMSGLSGHNVQVICKCY) the chain is Extracellular. N-linked (GlcNAc...) asparagine; by host glycosylation occurs at N51.

The protein belongs to the asfivirus X69R family.

The protein localises to the host membrane. This is an uncharacterized protein from Ornithodoros (relapsing fever ticks).